The chain runs to 503 residues: Lysine--tRNA ligase (503 aa).

Residues Glu-414 and Glu-421 each contribute to the Mg(2+) site.

Belongs to the class-II aminoacyl-tRNA synthetase family. As to quaternary structure, homodimer. Mg(2+) is required as a cofactor.

It is found in the cytoplasm. It catalyses the reaction tRNA(Lys) + L-lysine + ATP = L-lysyl-tRNA(Lys) + AMP + diphosphate. The chain is Lysine--tRNA ligase from Neisseria meningitidis serogroup A / serotype 4A (strain DSM 15465 / Z2491).